The following is a 364-amino-acid chain: Trans-enoyl reductase ccsC (364 aa).

52 to 55 (CDYK) contributes to the NADP(+) binding site. 141 to 148 (TGLATLGM) lines the substrate pocket. Residues 176-179 (SSSV), 199-202 (SPRN), Tyr-217, and 264-265 (LE) each bind NADP(+). 284–288 (GPALL) provides a ligand contact to substrate. Residue 353-354 (VS) coordinates NADP(+).

The protein belongs to the zinc-containing alcohol dehydrogenase family. Monomer.

The protein operates within mycotoxin biosynthesis. In terms of biological role, trans-enoyl reductase; part of the gene cluster that mediates the biosynthesis of a family of the mycotoxins cytochalasins E and K. The hybrid PKS-NRPS synthetase ccsA and the enoyl reductase ccsC are responsible for fusion of phenylalanine with an octaketide backbone and subsequent release of the stable tetramic acid precursor. The polyketide synthase module (PKS) of the PKS-NRPS ccsA is responsible for the synthesis of the octaketide backbone. The downstream nonribosomal peptide synthetase (NRPS) amidates the carboxyl end of the octaketide with a phenylalanine. A reductase-like domain (R) at the C-terminus catalyzes the reductive release of the polyketide-amino acid intermediate. Because ccsA lacks a designated enoylreductase (ER) domain, the required activity is provided the enoyl reductase ccsC. Upon formation of the 11-membered carbocycle-fused perhydroisoindolone intermediate, a number of oxidative steps are required to afford the final cytochalasin E and K, including two hydroxylations at C17 and C18, one alcohol oxidation at C17, one epoxidation at C6 and C7 and two Baeyer-Villiger oxidations. The oxidative modification at C17, C18 and the C6-C7 epoxidation are likely to be catalyzed by the two cytochrome P450 oxygenases ccsD and ccsG. CcsD may be responsible for the epoxidation of the C6-C7 double bond. CcsG may be responsible for the successive oxidative modifications at C17 and C18. The double Baeyer-Villiger oxidations of ketocytochalasin to precytochalasin and cytochalasin Z(16) are among the final steps leading to cytochalasin E and K and are catalyzed by ccsB. The first oxygen insertion step follows that of the classic BVMO mechanism, generating the ester precytochalasin. Release of precytochalasin into an aqueous environment can generate the shunt product iso-precytochalasin through spontaneous isomerization. Alternatively, precytochalasin can undergo further oxidation by ccsB to yield the in-line carbonate-containing cytochalasin Z(16). Cytochalasin Z(16) is a precursor to cytochalasin E and cytochalasin K, whereas iso-precytochalasin is a precursor to cytochalasin Z(17) and rosellichalasin. The hydrolyase ccsE may catalyze hydrolysis of epoxide bond in cytochalasin E to afford cytochalasin K. The function of ccsF has not been assigned but it may play a role in post-PKS-NRPS biosynthetic step, resistance or transport of cytochalasins and related PKS-NRPS products. This Aspergillus clavatus (strain ATCC 1007 / CBS 513.65 / DSM 816 / NCTC 3887 / NRRL 1 / QM 1276 / 107) protein is Trans-enoyl reductase ccsC.